A 198-amino-acid chain; its full sequence is HTH-type transcriptional regulator BetI (198 aa).

Residues Pro8–Leu68 form the HTH tetR-type domain. A DNA-binding region (H-T-H motif) is located at residues Thr31–Phe50.

It functions in the pathway amine and polyamine biosynthesis; betaine biosynthesis via choline pathway [regulation]. In terms of biological role, repressor involved in the biosynthesis of the osmoprotectant glycine betaine. It represses transcription of the choline transporter BetT and the genes of BetAB involved in the synthesis of glycine betaine. In Brucella suis (strain ATCC 23445 / NCTC 10510), this protein is HTH-type transcriptional regulator BetI.